An 890-amino-acid chain; its full sequence is Nucleoside hydrolase 3 (890 aa).

Positions 1–21 (MLTSPTLKSLWFLFTILGLLG) are cleaved as a signal peptide. N-linked (GlcNAc...) asparagine glycosylation is found at Asn-55, Asn-232, Asn-371, Asn-485, Asn-580, Asn-655, and Asn-740.

This sequence belongs to the IUNH family.

It localises to the secreted. The protein resides in the extracellular space. It is found in the apoplast. It catalyses the reaction a purine D-ribonucleoside + H2O = a purine nucleobase + D-ribose. The enzyme catalyses inosine + H2O = hypoxanthine + D-ribose. It carries out the reaction adenosine + H2O = D-ribose + adenine. Extracellular purine-specific hydrolase present in the apoplastic fluid involved in the degradation of extracellular nucleosides, including inosine and adenosine, and which may participate in wound and pathogen responses (e.g. Botrytis cinerea). In Arabidopsis thaliana (Mouse-ear cress), this protein is Nucleoside hydrolase 3.